We begin with the raw amino-acid sequence, 341 residues long: S-adenosylmethionine:tRNA ribosyltransferase-isomerase (341 aa).

Belongs to the QueA family. Monomer.

The protein resides in the cytoplasm. It catalyses the reaction 7-aminomethyl-7-carbaguanosine(34) in tRNA + S-adenosyl-L-methionine = epoxyqueuosine(34) in tRNA + adenine + L-methionine + 2 H(+). It functions in the pathway tRNA modification; tRNA-queuosine biosynthesis. Its function is as follows. Transfers and isomerizes the ribose moiety from AdoMet to the 7-aminomethyl group of 7-deazaguanine (preQ1-tRNA) to give epoxyqueuosine (oQ-tRNA). In Clostridium botulinum (strain Eklund 17B / Type B), this protein is S-adenosylmethionine:tRNA ribosyltransferase-isomerase.